Reading from the N-terminus, the 266-residue chain is Vitamin B12-binding protein (266 aa).

Positions 1-22 (MAKSLFRALVALSFLAPLWLNA) are cleaved as a signal peptide. The region spanning 25-266 (RVITLSPANT…QLCNALSQVD (242 aa)) is the Fe/B12 periplasmic-binding domain. Cyanocob(III)alamin contacts are provided by residues Y50 and 242–246 (DWFER). C183 and C259 are joined by a disulfide.

The protein belongs to the BtuF family. In terms of assembly, the complex is composed of two ATP-binding proteins (BtuD), two transmembrane proteins (BtuC) and a solute-binding protein (BtuF).

It localises to the periplasm. Functionally, part of the ABC transporter complex BtuCDF involved in vitamin B12 import. Binds vitamin B12 and delivers it to the periplasmic surface of BtuC. The sequence is that of Vitamin B12-binding protein (btuF) from Escherichia coli (strain K12).